The following is a 449-amino-acid chain: Signal recognition particle protein (449 aa).

GTP contacts are provided by residues 109–116 (GLQGGGKT), 191–195 (DTAGR), and 249–252 (SRID).

It belongs to the GTP-binding SRP family. SRP54 subfamily. As to quaternary structure, part of the signal recognition particle protein translocation system, which is composed of SRP and FtsY. SRP is a ribonucleoprotein composed of Ffh and a 4.5S RNA molecule.

The protein resides in the cytoplasm. The catalysed reaction is GTP + H2O = GDP + phosphate + H(+). In terms of biological role, involved in targeting and insertion of nascent membrane proteins into the cytoplasmic membrane. Binds to the hydrophobic signal sequence of the ribosome-nascent chain (RNC) as it emerges from the ribosomes. The SRP-RNC complex is then targeted to the cytoplasmic membrane where it interacts with the SRP receptor FtsY. Interaction with FtsY leads to the transfer of the RNC complex to the Sec translocase for insertion into the membrane, the hydrolysis of GTP by both Ffh and FtsY, and the dissociation of the SRP-FtsY complex into the individual components. The polypeptide is Signal recognition particle protein (Rickettsia prowazekii (strain Madrid E)).